A 355-amino-acid polypeptide reads, in one-letter code: N-acylethanolamine-hydrolyzing acid amidase (355 aa).

The first 17 residues, 1-17, serve as a signal peptide directing secretion; the sequence is MLLLQIILLLLPVICSA. The active-site Nucleophile is the cysteine 122. N-linked (GlcNAc...) asparagine glycosylation is found at asparagine 150, asparagine 160, and asparagine 328.

This sequence belongs to the acid ceramidase family. As to quaternary structure, heterodimer of an alpha and a beta subunit, produced by autocatalytic cleavage. In terms of processing, N-glycosylated. Autoproteolytic cleavage at pH 4.5 gives rise to the alpha and beta subunit. Cleavage gives rise to a conformation change that activates the enzyme. The same catalytic Cys residue mediates the autoproteolytic cleavage and subsequent hydrolysis of lipid substrates.

The protein resides in the lysosome. It is found in the membrane. The enzyme catalyses N-hexadecanoylethanolamine + H2O = ethanolamine + hexadecanoate. The catalysed reaction is an N-(long-chain fatty acyl)ethanolamine + H2O = a long-chain fatty acid + ethanolamine. Its pathway is lipid metabolism; fatty acid metabolism. Degrades bioactive fatty acid amides, such as N-palmitoylethanolamine, to ethanolamine and free fatty acids. In Caenorhabditis elegans, this protein is N-acylethanolamine-hydrolyzing acid amidase.